A 2797-amino-acid polypeptide reads, in one-letter code: Nonribosomal peptide synthetase penN (2797 aa).

The segment at 239–625 (SRPDHPAICA…ARKDSQVKIR (387 aa)) is adenylation 1. Residues 751–824 (TDTERHVHRF…DIVSLVRTAT (74 aa)) form the Carrier 1 domain. At Ser785 the chain carries O-(pantetheine 4'-phosphoryl)serine. The disordered stretch occupies residues 830 to 856 (PSAGAEISRSDAPTESPATGSFEGSGY). The condensation 1 stretch occupies residues 870–1299 (QSFSQARMWF…DIEIGSLLLT (430 aa)). Positions 1328-1731 (FHQQVAAHGD…GRMDQQVKIR (404 aa)) are adenylation 2. The interval 1857–1953 (LEIGTGTGMI…VIKQLIQLHD (97 aa)) is methyltransferase. One can recognise a Carrier 2 domain in the interval 2277-2351 (SFTDDIERAM…RLAGRVRGFR (75 aa)). Ser2311 bears the O-(pantetheine 4'-phosphoryl)serine mark. The condensation 2 stretch occupies residues 2516 to 2658 (YDGISLSSIL…VNRTLIRVQL (143 aa)).

Belongs to the NRP synthetase family.

The enzyme catalyses O-methyl-L-tyrosine + anthranilate + S-adenosyl-L-methionine + 2 ATP = (-)-4'-methoxycyclopeptine + 2 AMP + S-adenosyl-L-homocysteine + 2 diphosphate + 2 H(+). It carries out the reaction anthranilate + L-phenylalanine + S-adenosyl-L-methionine + 2 ATP = cyclopeptine + 2 AMP + S-adenosyl-L-homocysteine + 2 diphosphate + 2 H(+). It functions in the pathway secondary metabolite biosynthesis. It participates in alkaloid biosynthesis. The protein operates within mycotoxin biosynthesis. Its function is as follows. Nonribosomal peptide synthetase; part of the gene cluster that mediates the biosynthesis of penigequinolones, potent insecticidal alkaloids that contain a highly modified 10-carbon prenyl group. The first stage is catalyzed by the nonribosomal peptide synthetase penN that condenses anthranilic acid and O-methyl-L-tyrosine to produce 4'-methoxycyclopeptin. 4'-methoxycyclopeptin is then converted to 4'-methoxydehydrocyclopeptin by the ketoglutarate-dependent dioxygenase penM through dehydrogenation to form a double bond between C-alpha and C-beta of the O-methyltyrosine side chain. PenM also converts its first product methoxydehydrocyclopeptin to 4'-methoxycyclopenin. The following conversion of 4'methoxycyclopenin into 4'-methoxyviridicatin is catalyzed by the cyclopenase penL. 4'-methoxyviridicatin is the precursor of quinolone natural products, and is further converted to quinolinone B. The prenyltransferase penI then catalyzes the canonical Friedel-Crafts alkylation of quinolinone B with dimethylallyl cation to yield dimethylallyl quinolone, which is subjected to FAD-dependent dehydrogenation by the FAD-linked oxidoreductase penH to yield conjugated aryl diene. The delta(3') double bond then serves as the site of the second alkylation with DMAPP catalyzed by the prenyltransferase penG to yield a carbenium ion intermediate, which can be attacked by H(2)O to yield a styrenyl quinolone containing a C3'-hydroxyprenyl chain, or undergo cyclization to yield yaequinolones J1 and J2. The conversion of the styrenyl quinolone into the tetrahydrofuran-containing yaequinolone C is performed by the FAD-dependent monooxygenase penE and involves epoxidation of the terminal C7'-C8' olefin, followed by epoxide ring opening initiated by the C3' hydroxyl group. The predicted cysteine hydrolase penJ acts as an epoxide hydrolase that enhances the rate of the 5-exo-tet cyclization step, increasing the yield of yaequinolone C. PenF catalyzes the cationic rearrangement of the epoxide formed by penE (before ring opening to produce yaequinolone C) into yaequinolone D. Finally, the short-chain dehydrogenase/reductase (SDR)-like reductase penD, catalyzes both the dehydration of yaequinolone D and the reduction of the resulting oxonium to yield penigequinolone. The protein is Nonribosomal peptide synthetase penN of Penicillium thymicola.